The following is a 317-amino-acid chain: 4-diphosphocytidyl-2-C-methyl-D-erythritol kinase (317 aa).

Lys-17 is an active-site residue. Residue 109–119 coordinates ATP; that stretch reads PVAGGMGGGSA. Asp-151 is an active-site residue.

Belongs to the GHMP kinase family. IspE subfamily.

It catalyses the reaction 4-CDP-2-C-methyl-D-erythritol + ATP = 4-CDP-2-C-methyl-D-erythritol 2-phosphate + ADP + H(+). It functions in the pathway isoprenoid biosynthesis; isopentenyl diphosphate biosynthesis via DXP pathway; isopentenyl diphosphate from 1-deoxy-D-xylulose 5-phosphate: step 3/6. Its function is as follows. Catalyzes the phosphorylation of the position 2 hydroxy group of 4-diphosphocytidyl-2C-methyl-D-erythritol. The protein is 4-diphosphocytidyl-2-C-methyl-D-erythritol kinase of Paenarthrobacter aurescens (strain TC1).